Consider the following 417-residue polypeptide: Serine hydroxymethyltransferase (417 aa).

(6S)-5,6,7,8-tetrahydrofolate-binding positions include Leu121 and 125-127 (GHL). Position 229 is an N6-(pyridoxal phosphate)lysine (Lys229). 355-357 (SPF) is a (6S)-5,6,7,8-tetrahydrofolate binding site.

The protein belongs to the SHMT family. Homodimer. It depends on pyridoxal 5'-phosphate as a cofactor.

The protein resides in the cytoplasm. The enzyme catalyses (6R)-5,10-methylene-5,6,7,8-tetrahydrofolate + glycine + H2O = (6S)-5,6,7,8-tetrahydrofolate + L-serine. Its pathway is one-carbon metabolism; tetrahydrofolate interconversion. It functions in the pathway amino-acid biosynthesis; glycine biosynthesis; glycine from L-serine: step 1/1. In terms of biological role, catalyzes the reversible interconversion of serine and glycine with tetrahydrofolate (THF) serving as the one-carbon carrier. This reaction serves as the major source of one-carbon groups required for the biosynthesis of purines, thymidylate, methionine, and other important biomolecules. Also exhibits THF-independent aldolase activity toward beta-hydroxyamino acids, producing glycine and aldehydes, via a retro-aldol mechanism. This is Serine hydroxymethyltransferase from Stenotrophomonas maltophilia (strain R551-3).